The following is a 376-amino-acid chain: Chaperone protein DnaJ 2 (376 aa).

The J domain maps to aspartate 8–glycine 72. A CR-type zinc finger spans residues glycine 143–lysine 219. Residues cysteine 156, cysteine 159, cysteine 172, cysteine 175, cysteine 194, cysteine 197, cysteine 207, and cysteine 210 each contribute to the Zn(2+) site. CXXCXGXG motif repeat units lie at residues cysteine 156 to glycine 163, cysteine 172 to glycine 179, cysteine 194 to glycine 201, and cysteine 207 to glycine 214.

Belongs to the DnaJ family. As to quaternary structure, homodimer. The cofactor is Zn(2+).

The protein localises to the cytoplasm. In terms of biological role, participates actively in the response to hyperosmotic and heat shock by preventing the aggregation of stress-denatured proteins and by disaggregating proteins, also in an autonomous, DnaK-independent fashion. Unfolded proteins bind initially to DnaJ; upon interaction with the DnaJ-bound protein, DnaK hydrolyzes its bound ATP, resulting in the formation of a stable complex. GrpE releases ADP from DnaK; ATP binding to DnaK triggers the release of the substrate protein, thus completing the reaction cycle. Several rounds of ATP-dependent interactions between DnaJ, DnaK and GrpE are required for fully efficient folding. Also involved, together with DnaK and GrpE, in the DNA replication of plasmids through activation of initiation proteins. The chain is Chaperone protein DnaJ 2 from Aquifex aeolicus (strain VF5).